The sequence spans 156 residues: SPbeta prophage-derived uncharacterized protein YosH (156 aa).

The chain is SPbeta prophage-derived uncharacterized protein YosH (yosH) from Bacillus subtilis (strain 168).